A 304-amino-acid chain; its full sequence is Aspartate carbamoyltransferase catalytic subunit (304 aa).

Residues Arg-55 and Thr-56 each contribute to the carbamoyl phosphate site. Lys-84 lines the L-aspartate pocket. Arg-105, His-133, and Gln-136 together coordinate carbamoyl phosphate. Residues Arg-165 and Arg-226 each contribute to the L-aspartate site. The carbamoyl phosphate site is built by Leu-265 and Pro-266.

Belongs to the aspartate/ornithine carbamoyltransferase superfamily. ATCase family. In terms of assembly, heterooligomer of catalytic and regulatory chains.

The enzyme catalyses carbamoyl phosphate + L-aspartate = N-carbamoyl-L-aspartate + phosphate + H(+). It participates in pyrimidine metabolism; UMP biosynthesis via de novo pathway; (S)-dihydroorotate from bicarbonate: step 2/3. Catalyzes the condensation of carbamoyl phosphate and aspartate to form carbamoyl aspartate and inorganic phosphate, the committed step in the de novo pyrimidine nucleotide biosynthesis pathway. The sequence is that of Aspartate carbamoyltransferase catalytic subunit from Methanothrix thermoacetophila (strain DSM 6194 / JCM 14653 / NBRC 101360 / PT) (Methanosaeta thermophila).